Reading from the N-terminus, the 509-residue chain is UDP-N-acetylmuramoyl-L-alanyl-D-glutamate--2,6-diaminopimelate ligase (509 aa).

Serine 32 serves as a coordination point for UDP-N-acetyl-alpha-D-muramoyl-L-alanyl-D-glutamate. An ATP-binding site is contributed by 117 to 123 (GTNGKTT). UDP-N-acetyl-alpha-D-muramoyl-L-alanyl-D-glutamate is bound by residues 159-160 (TT), serine 186, glutamine 192, and arginine 194. At lysine 226 the chain carries N6-carboxylysine. Meso-2,6-diaminopimelate is bound by residues arginine 401, 425–428 (DNPR), glycine 476, and glutamate 480. Positions 425-428 (DNPR) match the Meso-diaminopimelate recognition motif motif.

This sequence belongs to the MurCDEF family. MurE subfamily. Requires Mg(2+) as cofactor. Post-translationally, carboxylation is probably crucial for Mg(2+) binding and, consequently, for the gamma-phosphate positioning of ATP.

The protein localises to the cytoplasm. The enzyme catalyses UDP-N-acetyl-alpha-D-muramoyl-L-alanyl-D-glutamate + meso-2,6-diaminopimelate + ATP = UDP-N-acetyl-alpha-D-muramoyl-L-alanyl-gamma-D-glutamyl-meso-2,6-diaminopimelate + ADP + phosphate + H(+). The protein operates within cell wall biogenesis; peptidoglycan biosynthesis. In terms of biological role, catalyzes the addition of meso-diaminopimelic acid to the nucleotide precursor UDP-N-acetylmuramoyl-L-alanyl-D-glutamate (UMAG) in the biosynthesis of bacterial cell-wall peptidoglycan. The sequence is that of UDP-N-acetylmuramoyl-L-alanyl-D-glutamate--2,6-diaminopimelate ligase from Prochlorococcus marinus (strain NATL1A).